The chain runs to 146 residues: Anti-sigma F factor (146 aa).

The protein belongs to the anti-sigma-factor family.

The enzyme catalyses L-seryl-[protein] + ATP = O-phospho-L-seryl-[protein] + ADP + H(+). It catalyses the reaction L-threonyl-[protein] + ATP = O-phospho-L-threonyl-[protein] + ADP + H(+). Functionally, binds to sigma F and blocks its ability to form an RNA polymerase holoenzyme (E-sigma F). Phosphorylates SpoIIAA on a serine residue. This phosphorylation may enable SpoIIAA to act as an anti-anti-sigma factor that counteracts SpoIIAB and thus releases sigma F from inhibition. This chain is Anti-sigma F factor (spoIIAB), found in Bacillus subtilis (strain 168).